The chain runs to 335 residues: Pyruvate dehydrogenase E1 component subunit beta (335 aa).

Glu-60 contacts thiamine diphosphate. K(+) is bound by residues Ala-161, Ile-162, and Asn-166.

In terms of assembly, heterodimer of an alpha and a beta chain. The cofactor is thiamine diphosphate.

The protein resides in the plastid. It localises to the chloroplast. It carries out the reaction N(6)-[(R)-lipoyl]-L-lysyl-[protein] + pyruvate + H(+) = N(6)-[(R)-S(8)-acetyldihydrolipoyl]-L-lysyl-[protein] + CO2. In terms of biological role, the pyruvate dehydrogenase complex catalyzes the overall conversion of pyruvate to acetyl-CoA and CO(2). It contains multiple copies of three enzymatic components: pyruvate dehydrogenase (E1), dihydrolipoamide acetyltransferase (E2) and lipoamide dehydrogenase (E3). This Chlorokybus atmophyticus (Soil alga) protein is Pyruvate dehydrogenase E1 component subunit beta (pdhB).